The primary structure comprises 86 residues: Mu-theraphotoxin-Cg2a 1 (86 aa).

The signal sequence occupies residues 1–21; it reads MKVSVVITLAVLGIMFVWASA. A propeptide spanning residues 22–50 is cleaved from the precursor; that stretch reads AELEERGSDQRDSPAWLKSMERIFQSEER. 3 disulfides stabilise this stretch: C52-C66, C59-C71, and C65-C78. The residue at position 84 (F84) is a Phenylalanine amide.

The protein belongs to the neurotoxin 10 (Hwtx-1) family. 37 (Jztx-31) subfamily. As to expression, expressed by the venom gland.

It localises to the secreted. Functionally, inhibits both peak current and fast inactivation of voltage-gated sodium channels (Nav) channels. Inhibits the inactivation of Nav on DRG neurons (EC(50)=1.77 uM) and peak current of cardiac myocytes (IC(50)=0.90 uM). In Chilobrachys guangxiensis (Chinese earth tiger tarantula), this protein is Mu-theraphotoxin-Cg2a 1.